A 927-amino-acid chain; its full sequence is Isoleucine--tRNA ligase (927 aa).

The 'HIGH' region signature appears at 57 to 67 (PFANGNIHMGH). Glutamate 553 contributes to the L-isoleucyl-5'-AMP binding site. The 'KMSKS' region signature appears at 594-598 (KMSKS). An ATP-binding site is contributed by lysine 597. 4 residues coordinate Zn(2+): cysteine 886, cysteine 889, cysteine 906, and cysteine 909.

This sequence belongs to the class-I aminoacyl-tRNA synthetase family. IleS type 1 subfamily. As to quaternary structure, monomer. Zn(2+) serves as cofactor.

The protein localises to the cytoplasm. It carries out the reaction tRNA(Ile) + L-isoleucine + ATP = L-isoleucyl-tRNA(Ile) + AMP + diphosphate. In terms of biological role, catalyzes the attachment of isoleucine to tRNA(Ile). As IleRS can inadvertently accommodate and process structurally similar amino acids such as valine, to avoid such errors it has two additional distinct tRNA(Ile)-dependent editing activities. One activity is designated as 'pretransfer' editing and involves the hydrolysis of activated Val-AMP. The other activity is designated 'posttransfer' editing and involves deacylation of mischarged Val-tRNA(Ile). The chain is Isoleucine--tRNA ligase from Lactobacillus acidophilus (strain ATCC 700396 / NCK56 / N2 / NCFM).